The primary structure comprises 89 residues: DNA/RNA-binding protein Alba (89 aa).

Position 11 is an N6-acetyllysine (Lys11).

Belongs to the histone-like Alba family. Post-translationally, acetylated. Acetylation at Lys-11 decreases DNA-binding affinity.

It localises to the cytoplasm. The protein resides in the chromosome. In terms of biological role, binds double-stranded DNA tightly but without sequence specificity. Involved in DNA compaction. This Thermoplasma volcanium (strain ATCC 51530 / DSM 4299 / JCM 9571 / NBRC 15438 / GSS1) protein is DNA/RNA-binding protein Alba.